We begin with the raw amino-acid sequence, 492 residues long: Trehalose-phosphatase (492 aa).

The disordered stretch occupies residues 1–55; that stretch reads MTETVTDQGKQRSSKLQKNEAAKDEQVEGKGKETLESGTDKSAEQNSSLLVGQPD. The span at 17-43 shows a compositional bias: basic and acidic residues; that stretch reads QKNEAAKDEQVEGKGKETLESGTDKSA. Mg(2+) contacts are provided by D213 and D215. The Proton donor/acceptor role is filled by D215. 332–334 serves as a coordination point for substrate; that stretch reads QRK. Residue D424 coordinates Mg(2+).

Belongs to the gob-1 trehalose phosphatase family. It depends on Mg(2+) as a cofactor.

It catalyses the reaction alpha,alpha-trehalose 6-phosphate + H2O = alpha,alpha-trehalose + phosphate. With respect to regulation, inhibited by trehalose 6-sulfate. In terms of biological role, catalyzes the hydrolysis of trehalose 6-phosphate to trehalose and phosphate; prevents the accumulation of toxic levels of trehalose 6-phosphate. The protein is Trehalose-phosphatase of Brugia malayi (Filarial nematode worm).